Reading from the N-terminus, the 531-residue chain is MEAPAQKAGQGGLPKADAQGASGAREKRPEEPRPLEEDRAGSRPTQKGDLRGAAGGRTTPPGGGSRGCSLGVSPGPGTRHSAGTRPLVREPCGPTSSQNPELVIPEGLQAREGPCRSPARGGDCSRNSCLAWHRGAPAGETPPVCDPCPERIQNHPRTQLCEVHTDCWPCQPGTGAPTCPRTPKPTSRGRNPLVEQPRACACGEAFAWRALRIPQERLQATEEPRPCARCGKRFRPNQQQQAGKSPPVCPECGQTSRPRPIVPDPPAQRLYACDECGKAFTRTSSLLQHQRIHTGERPYECAECGKAFVRCSGLYRHQKTHSAERHRRGPVLARRAFRLGCPPCGDYSERSPRRGSGAGEKPYECADCAKAFGLFSHLVEHRRVHTGEKPYACPECGKAFNQRSNLSRHQRTHSSAKPYACPLCEKAFKGRSGLVQHQRAHTGERPYGCSECGKTFRGCSELRQHERLHSGEKPYICRDCGKAFVRNCSLVRHLRTHTGERPYACGDCGRAFSQRSNLNEHRKRHGGRAAP.

The tract at residues 1–101 (MEAPAQKAGQ…CGPTSSQNPE (101 aa)) is disordered. Residues 24-50 (AREKRPEEPRPLEEDRAGSRPTQKGDL) show a composition bias toward basic and acidic residues. 8 C2H2-type zinc fingers span residues 271–293 (YACDECGKAFTRTSSLLQHQRIH), 299–321 (YECAECGKAFVRCSGLYRHQKTH), 363–385 (YECADCAKAFGLFSHLVEHRRVH), 391–413 (YACPECGKAFNQRSNLSRHQRTH), 419–441 (YACPLCEKAFKGRSGLVQHQRAH), 447–469 (YGCSECGKTFRGCSELRQHERLH), 475–497 (YICRDCGKAFVRNCSLVRHLRTH), and 503–525 (YACGDCGRAFSQRSNLNEHRKRH).

This sequence belongs to the krueppel C2H2-type zinc-finger protein family.

The protein localises to the nucleus. Its function is as follows. May be involved in transcriptional regulation. This is Zinc finger protein 837 (ZNF837) from Homo sapiens (Human).